The chain runs to 202 residues: Matrix protein (202 aa).

The PPXY motif motif lies at 35–38 (PPEY). An essential for glycoprotein binding region spans residues 115 to 151 (KIRRTLVFQWAESSGPLDGEELEYSQEITWDDDSEFV).

It belongs to the lyssavirus matrix protein family. As to quaternary structure, homomultimer. Interacts with nucleoprotein and with the cytoplasmic domain of glycoprotein.

The protein resides in the virion membrane. It localises to the host endomembrane system. Its function is as follows. Plays a major role in assembly and budding of virion. Completely covers the ribonucleoprotein coil and keep it in condensed bullet-shaped form. Inhibits viral transcription and stimulates replication. Plays a major role in early induction of TRAIL-mediated apoptosis in infected neurons. This Irkut virus (IRKV) protein is Matrix protein (M).